Reading from the N-terminus, the 321-residue chain is Probable protein phosphatase 2C 44 (321 aa).

2 disordered regions span residues 1–36 (MVGR…GGKK) and 51–70 (NSSS…NKVT). Low complexity predominate over residues 9-31 (SASSSASCSPSSSAAGTSSSSSA). Residues 51–69 (NSSSTDTGKGRSKQSSNKV) are compositionally biased toward polar residues. The PPM-type phosphatase domain occupies 70–319 (THGFHLVEGK…DDISCIVIRF (250 aa)). Positions 107, 108, 271, and 310 each coordinate Mn(2+).

This sequence belongs to the PP2C family. Requires Mg(2+) as cofactor. Mn(2+) is required as a cofactor.

The enzyme catalyses O-phospho-L-seryl-[protein] + H2O = L-seryl-[protein] + phosphate. The catalysed reaction is O-phospho-L-threonyl-[protein] + H2O = L-threonyl-[protein] + phosphate. The chain is Probable protein phosphatase 2C 44 from Oryza sativa subsp. japonica (Rice).